Consider the following 959-residue polypeptide: Isoleucine--tRNA ligase (959 aa).

The short motif at 66 to 76 is the 'HIGH' region element; the sequence is PYANGDLHIGH. E592 lines the L-isoleucyl-5'-AMP pocket. Positions 633-637 match the 'KMSKS' region motif; the sequence is KMSKS. Residue K636 coordinates ATP. 4 residues coordinate Zn(2+): C922, C925, C942, and C945.

It belongs to the class-I aminoacyl-tRNA synthetase family. IleS type 1 subfamily. In terms of assembly, monomer. It depends on Zn(2+) as a cofactor.

Its subcellular location is the cytoplasm. It carries out the reaction tRNA(Ile) + L-isoleucine + ATP = L-isoleucyl-tRNA(Ile) + AMP + diphosphate. In terms of biological role, catalyzes the attachment of isoleucine to tRNA(Ile). As IleRS can inadvertently accommodate and process structurally similar amino acids such as valine, to avoid such errors it has two additional distinct tRNA(Ile)-dependent editing activities. One activity is designated as 'pretransfer' editing and involves the hydrolysis of activated Val-AMP. The other activity is designated 'posttransfer' editing and involves deacylation of mischarged Val-tRNA(Ile). The polypeptide is Isoleucine--tRNA ligase (Ralstonia pickettii (strain 12J)).